Reading from the N-terminus, the 662-residue chain is Transketolase (662 aa).

His-28 is a binding site for substrate. Thiamine diphosphate contacts are provided by residues His-68 and 115 to 117 (GPL). Asp-156 provides a ligand contact to Mg(2+). Thiamine diphosphate-binding residues include Gly-157 and Asn-186. 2 residues coordinate Mg(2+): Asn-186 and Ile-188. His-261, Arg-356, and Ser-383 together coordinate substrate. Residue His-261 participates in thiamine diphosphate binding. The Proton donor role is filled by Glu-410. Phe-436 provides a ligand contact to thiamine diphosphate. Substrate contacts are provided by His-460, Asp-468, and Arg-519.

It belongs to the transketolase family. In terms of assembly, homodimer. Mg(2+) is required as a cofactor. It depends on Ca(2+) as a cofactor. The cofactor is Mn(2+). Requires Co(2+) as cofactor. Thiamine diphosphate serves as cofactor.

It catalyses the reaction D-sedoheptulose 7-phosphate + D-glyceraldehyde 3-phosphate = aldehydo-D-ribose 5-phosphate + D-xylulose 5-phosphate. It functions in the pathway carbohydrate biosynthesis; Calvin cycle. Its pathway is carbohydrate degradation; pentose phosphate pathway. Its function is as follows. Catalyzes the transfer of a two-carbon ketol group from a ketose donor to an aldose acceptor, via a covalent intermediate with the cofactor thiamine pyrophosphate. This chain is Transketolase (tkt), found in Staphylococcus aureus (strain MRSA252).